Consider the following 104-residue polypeptide: MKFFVLFAILIAIVHASCASVPKVVYDGPIYELRQIEEENIEPDTELMDSNEPLLPLRHRRVTCDVLSWQSKWLSINHSACAIRCLAQRRKGGSCRNGVCICRK.

Residues 1-19 (MKFFVLFAILIAIVHASCA) form the signal peptide. 3 disulfide bridges follow: C64–C95, C81–C100, and C85–C102.

It belongs to the invertebrate defensin family. Type 1 subfamily. In terms of tissue distribution, low expression in head and thorax.

It is found in the secreted. In terms of biological role, antibacterial peptide mostly active against Gram-positive bacteria. In Apis mellifera (Honeybee), this protein is Defensin-2.